We begin with the raw amino-acid sequence, 393 residues long: Putative zinc metalloprotease Rip3 (393 aa).

The next 2 membrane-spanning stretches (helical) occupy residues 10–30 and 45–65; these read IAGF…LFTW and AVVY…SLLA. H66 is a Zn(2+) binding site. Residue E67 is part of the active site. A Zn(2+)-binding site is contributed by H70. A run of 4 helical transmembrane segments spans residues 77 to 97, 108 to 128, 136 to 156, and 207 to 227; these read AGVS…ALGG, IAFA…ALAI, PAIV…LGLF, and FVAG…FIFA. CBS domains lie at 251-308 and 315-376; these read MTAQ…RRST and ALPL…AQPE.

It belongs to the peptidase M50B family. It depends on Zn(2+) as a cofactor.

It localises to the cell membrane. This is Putative zinc metalloprotease Rip3 (rip3) from Mycobacterium tuberculosis (strain ATCC 35801 / TMC 107 / Erdman).